A 44-amino-acid polypeptide reads, in one-letter code: Cytochrome b559 subunit beta (44 aa).

A helical membrane pass occupies residues 19–35 (WIAVHTLAVPSVFFLGA). His23 is a binding site for heme.

It belongs to the PsbE/PsbF family. As to quaternary structure, heterodimer of an alpha subunit and a beta subunit. PSII is composed of 1 copy each of membrane proteins PsbA, PsbB, PsbC, PsbD, PsbE, PsbF, PsbH, PsbI, PsbJ, PsbK, PsbL, PsbM, PsbT, PsbX, PsbY, PsbZ, Psb30/Ycf12, peripheral proteins PsbO, CyanoQ (PsbQ), PsbU, PsbV and a large number of cofactors. It forms dimeric complexes. The cofactor is heme b.

The protein localises to the cellular thylakoid membrane. Its function is as follows. This b-type cytochrome is tightly associated with the reaction center of photosystem II (PSII). PSII is a light-driven water:plastoquinone oxidoreductase that uses light energy to abstract electrons from H(2)O, generating O(2) and a proton gradient subsequently used for ATP formation. It consists of a core antenna complex that captures photons, and an electron transfer chain that converts photonic excitation into a charge separation. This chain is Cytochrome b559 subunit beta, found in Cyanothece sp. (strain PCC 7425 / ATCC 29141).